A 440-amino-acid polypeptide reads, in one-letter code: Alpha-methylserine aldolase (440 aa).

Lys-255 carries the N6-(pyridoxal phosphate)lysine modification.

This sequence belongs to the SHMT family. Alpha-methylserine aldolase subfamily. Homodimer. The cofactor is pyridoxal 5'-phosphate.

It carries out the reaction 2-methyl-L-serine = formaldehyde + L-alanine. It catalyses the reaction 2-ethyl-L-serine = (2S)-2-aminobutanoate + formaldehyde. In the alpha-methyl-L-serine synthesis reaction, activity is inhibited by an excess amount of formaldehyde (at a concentration greater than 4 mM). Formaldehyde release activity is reduced by the sulfhydryl reagent N-ethylmaleimide, iodoacetate amide and iodoacetic acid, but not by dithiothreitol and 2-mercaptoethanol. Activity is enhanced by 1 mM of manganese chloride. Catalyzes the reversible interconversion of alpha-methyl-L-serine to L-alanine and formaldehyde. Can also catalyze the synthesis of alpha-ethyl-L-serine from L-2-aminobutyric acid and formaldehyde. Also shows low alanine racemase activity. Cannot use alpha-methyl-D-serine, L-serine, D-serine, (S)-2-amino-1-propanol, (R)-2-amino-1-propanol, (S)-alpha-hydroxymethyltyrosine, (R)-alpha-hydroxymethyltyrosine, alpha-iso-butyl-DL-serine, alpha-iso-propyl-DL-serine or alpha-benzyl-DL-serine. Cannot use D-alanine instead of L-alanine as the substrate for alpha-methyl-L-serine synthesis. Does not require tetrahydrofolate (THF) for activity. This is Alpha-methylserine aldolase from Variovorax paradoxus.